The sequence spans 56 residues: MAHENVWYSHPRKFGKGSRQCRISGSHSGLIRKYGLNIDRQSFREKANDIGFYKYR.

Belongs to the universal ribosomal protein uS14 family.

The polypeptide is Small ribosomal subunit protein uS14 (RPS29) (Kluyveromyces lactis (strain ATCC 8585 / CBS 2359 / DSM 70799 / NBRC 1267 / NRRL Y-1140 / WM37) (Yeast)).